Consider the following 159-residue polypeptide: 2-C-methyl-D-erythritol 2,4-cyclodiphosphate synthase (159 aa).

Residues aspartate 10 and histidine 12 each coordinate a divalent metal cation. 4-CDP-2-C-methyl-D-erythritol 2-phosphate is bound by residues 10-12 (DVH) and 36-37 (HS). Residue histidine 44 participates in a divalent metal cation binding. 4-CDP-2-C-methyl-D-erythritol 2-phosphate-binding positions include 58–60 (DIG), 134–137 (TTSE), phenylalanine 141, and arginine 144.

The protein belongs to the IspF family. Homotrimer. A divalent metal cation is required as a cofactor.

It carries out the reaction 4-CDP-2-C-methyl-D-erythritol 2-phosphate = 2-C-methyl-D-erythritol 2,4-cyclic diphosphate + CMP. It functions in the pathway isoprenoid biosynthesis; isopentenyl diphosphate biosynthesis via DXP pathway; isopentenyl diphosphate from 1-deoxy-D-xylulose 5-phosphate: step 4/6. In terms of biological role, involved in the biosynthesis of isopentenyl diphosphate (IPP) and dimethylallyl diphosphate (DMAPP), two major building blocks of isoprenoid compounds. Catalyzes the conversion of 4-diphosphocytidyl-2-C-methyl-D-erythritol 2-phosphate (CDP-ME2P) to 2-C-methyl-D-erythritol 2,4-cyclodiphosphate (ME-CPP) with a corresponding release of cytidine 5-monophosphate (CMP). The chain is 2-C-methyl-D-erythritol 2,4-cyclodiphosphate synthase from Cereibacter sphaeroides (strain ATCC 17025 / ATH 2.4.3) (Rhodobacter sphaeroides).